The chain runs to 505 residues: Histidine ammonia-lyase (505 aa).

The 5-imidazolinone (Ala-Gly) cross-link spans 141 to 143 (ASG). Residue serine 142 is modified to 2,3-didehydroalanine (Ser).

This sequence belongs to the PAL/histidase family. Contains an active site 4-methylidene-imidazol-5-one (MIO), which is formed autocatalytically by cyclization and dehydration of residues Ala-Ser-Gly.

The protein localises to the cytoplasm. The catalysed reaction is L-histidine = trans-urocanate + NH4(+). It participates in amino-acid degradation; L-histidine degradation into L-glutamate; N-formimidoyl-L-glutamate from L-histidine: step 1/3. This chain is Histidine ammonia-lyase, found in Bacillus cereus (strain ATCC 10987 / NRS 248).